The chain runs to 274 residues: Rhamnulose-1-phosphate aldolase (274 aa).

Glu117 is a catalytic residue. Zn(2+)-binding residues include His141, His143, and His212.

The protein belongs to the aldolase class II family. RhaD subfamily. As to quaternary structure, homotetramer. Requires Zn(2+) as cofactor.

It localises to the cytoplasm. It carries out the reaction L-rhamnulose 1-phosphate = (S)-lactaldehyde + dihydroxyacetone phosphate. Its pathway is carbohydrate degradation; L-rhamnose degradation; glycerone phosphate from L-rhamnose: step 3/3. Functionally, catalyzes the reversible cleavage of L-rhamnulose-1-phosphate to dihydroxyacetone phosphate (DHAP) and L-lactaldehyde. This chain is Rhamnulose-1-phosphate aldolase, found in Pectobacterium carotovorum subsp. carotovorum (strain PC1).